We begin with the raw amino-acid sequence, 115 residues long: Putative membrane protein insertion efficiency factor (115 aa).

It belongs to the UPF0161 family.

It is found in the cell membrane. Its function is as follows. Could be involved in insertion of integral membrane proteins into the membrane. The sequence is that of Putative membrane protein insertion efficiency factor from Mycobacterium avium (strain 104).